A 504-amino-acid polypeptide reads, in one-letter code: ATP-dependent rRNA helicase RRP3 (504 aa).

Over residues 34–62 the composition is skewed to low complexity; it reads ASASSAASTKESLPVSETISISTSETPVS. Residues 34 to 99 form a disordered region; sequence ASASSAASTK…SSSSPPSVQS (66 aa). Over residues 68-79 the composition is skewed to basic and acidic residues; it reads SNKEDLSTKKDQ. The segment covering 80–99 has biased composition (low complexity); it reads SSASSSSSTSSSSSPPSVQS. A Q motif motif is present at residues 98–126; sequence QSFTEFDLVPELLESIQSLKYTQPTPIQA. Residues 129–301 enclose the Helicase ATP-binding domain; sequence IPHALQGKDI…RSLNSPVQVE (173 aa). 142–149 provides a ligand contact to ATP; it reads AETGSGKT. Positions 248-251 match the DEAD box motif; that stretch reads DEVD. The Helicase C-terminal domain occupies 327 to 471; that stretch reads RLIQIVNLDS…DLPLDEMQGL (145 aa).

The protein belongs to the DEAD box helicase family. DDX47/RRP3 subfamily. As to quaternary structure, interacts with the SSU processome.

The protein resides in the nucleus. The enzyme catalyses ATP + H2O = ADP + phosphate + H(+). In terms of biological role, ATP-dependent rRNA helicase required for pre-ribosomal RNA processing. Involved in the maturation of the 35S-pre-rRNA and to its cleavage to mature 18S rRNA. The polypeptide is ATP-dependent rRNA helicase RRP3 (Lodderomyces elongisporus (strain ATCC 11503 / CBS 2605 / JCM 1781 / NBRC 1676 / NRRL YB-4239) (Yeast)).